The primary structure comprises 554 residues: Phenylalanine--tRNA ligase beta subunit (554 aa).

Residues 274-351 (LTPDSAEITI…INYGYENFNG (78 aa)) form the B5 domain. Asp329, Asp335, and Asp339 together coordinate Mg(2+).

Belongs to the phenylalanyl-tRNA synthetase beta subunit family. Type 2 subfamily. As to quaternary structure, tetramer of two alpha and two beta subunits. Mg(2+) is required as a cofactor.

It localises to the cytoplasm. The catalysed reaction is tRNA(Phe) + L-phenylalanine + ATP = L-phenylalanyl-tRNA(Phe) + AMP + diphosphate + H(+). The sequence is that of Phenylalanine--tRNA ligase beta subunit from Methanococcus aeolicus (strain ATCC BAA-1280 / DSM 17508 / OCM 812 / Nankai-3).